We begin with the raw amino-acid sequence, 252 residues long: Thiamine thiazole synthase (252 aa).

Residues serine 35, 54–55 (EK), glycine 62, valine 126, and 152–154 (HVD) each bind NAD(+). The Fe cation site is built by aspartate 154 and histidine 169. Methionine 217 is an NAD(+) binding site. Arginine 227 contributes to the glycine binding site.

It belongs to the THI4 family. As to quaternary structure, homooctamer; tetramer of dimers. It depends on Fe(2+) as a cofactor.

The catalysed reaction is hydrogen sulfide + glycine + NAD(+) = ADP-5-ethyl-4-methylthiazole-2-carboxylate + nicotinamide + 3 H2O + H(+). Its pathway is cofactor biosynthesis; thiamine diphosphate biosynthesis. Functionally, involved in the biosynthesis of the thiazole moiety of thiamine. Catalyzes the conversion of NAD and glycine to adenosine diphosphate 5-(2-hydroxyethyl)-4-methylthiazole-2-carboxylate (ADT), an adenylated thiazole intermediate, using free sulfide as a source of sulfur. This chain is Thiamine thiazole synthase, found in Pyrococcus horikoshii (strain ATCC 700860 / DSM 12428 / JCM 9974 / NBRC 100139 / OT-3).